Reading from the N-terminus, the 166-residue chain is MKLSNKVTQLTDIIAPAVAACDVALWGVEFLPQGGRSLLRIYIEALPEDKAADKQVTIENCAAVTHQVSGVLEVHDPIAGEYVLEVSSPGLDRPFFAPEQMTDYMGQTINLRLIQAVGSGSSKRRKVTGKLEQLDDKQLSVVTADGERYDIALDNIDKANLIYQDL.

Belongs to the RimP family.

Its subcellular location is the cytoplasm. Required for maturation of 30S ribosomal subunits. This Psychrobacter sp. (strain PRwf-1) protein is Ribosome maturation factor RimP.